The primary structure comprises 471 residues: Abscission/NoCut checkpoint regulator (471 aa).

The tract at residues 39–64 (GGAGQGREGRSWGEGPRGPGLGRRDL) is disordered. Residues 74-133 (ATMESRCYGCAVKFTLFKKEYGCKNCGRAFCSGCLSFSAAVPRTGNTQQKVCKQCHEVLT) form an FYVE-type zinc finger. The Zn(2+) site is built by C80, C83, C96, C99, C104, C107, C125, and C128. Residue S144 is modified to Phosphoserine. The short motif at 174–187 (DQMIAERLARLRQE) is the MIM1-A element. Residue K207 forms a Glycyl lysine isopeptide (Lys-Gly) (interchain with G-Cter in SUMO2) linkage. The residue at position 243 (T243) is a Phosphothreonine. The disordered stretch occupies residues 271 to 299 (KGGGPAASLQNDLNQGGPGSTNSKRQANW). Positions 278 to 299 (SLQNDLNQGGPGSTNSKRQANW) are enriched in polar residues. A phosphoserine mark is found at G286 and S293. Positions 311–375 (EAALELREEN…RVLQQLTEEA (65 aa)) form a coiled coil. The MIM1-B motif lies at 326-339 (ILALAKRLAMLRGQ). Residue S354 is modified to Phosphoserine. The interval 386–412 (PAEQASRPWTQPRGAEPEAQDVDPRPE) is disordered. Phosphoserine is present on S463.

Interacts (via MIM1-B) with VPS4A; interaction takes place at the midbody ring following cytokinesis checkpoint activation. Post-translationally, phosphorylated in vitro at Ser-22 by AURKB; however, phosphorylation at this site could not be confirmed in vivo. Detected in brain, heart, skeletal muscle and kidney. Expressed in the liver (at protein level).

The protein resides in the cytoplasm. It localises to the cytoskeleton. It is found in the microtubule organizing center. The protein localises to the centrosome. Its subcellular location is the cleavage furrow. The protein resides in the midbody. It localises to the midbody ring. Its function is as follows. Key regulator of abscission step in cytokinesis: part of the cytokinesis checkpoint, a process required to delay abscission to prevent both premature resolution of intercellular chromosome bridges and accumulation of DNA damage. Together with CHMP4C, required to retain abscission-competent VPS4 (VPS4A and/or VPS4B) at the midbody ring until abscission checkpoint signaling is terminated at late cytokinesis. Deactivation of AURKB results in dephosphorylation of CHMP4C followed by its dissociation from ZFYVE19/ANCHR and VPS4 and subsequent abscission. In Homo sapiens (Human), this protein is Abscission/NoCut checkpoint regulator (ZFYVE19).